Consider the following 595-residue polypeptide: Myb-like protein D (595 aa).

Disordered regions lie at residues 1–47 (MQQQ…NGLV), 55–74 (QQYQ…DEGE), 82–266 (DESQ…NNRK), and 319–445 (VLQK…IWTQ). Over residues 19–47 (DNYNNNNSNINTNNNNSINDYENQNNGLV) the composition is skewed to low complexity. Over residues 60-74 (DQNDSFDDDSMDEGE) the composition is skewed to acidic residues. Low complexity-rich tracts occupy residues 90–212 (NNNN…ENNN) and 225–264 (NNNN…NNNN). Basic residues predominate over residues 324-348 (TLNRNRSRSRSRSNSRSHSRSRSRS). Low complexity-rich tracts occupy residues 349–368 (RSLS…YSRS) and 376–420 (NNNN…NNNN). Residues 423 to 434 (RKSEDDNQDDGK) are compositionally biased toward basic and acidic residues. One can recognise an HTH myb-type domain in the interval 435–489 (KKHRKNAIWTQEEDEKMAQLYNKYGKSWKAIHSHFDDKTREQVQSHGQYLIRIGK). Positions 462–485 (WKAIHSHFDDKTREQVQSHGQYLI) form a DNA-binding region, H-T-H motif. The segment at 494–595 (HRDGRKERRK…NSSNYVNNDN (102 aa)) is disordered. Low complexity predominate over residues 517 to 595 (QQNQQNNNNN…NSSNYVNNDN (79 aa)).

It localises to the nucleus. The polypeptide is Myb-like protein D (mybD) (Dictyostelium discoideum (Social amoeba)).